The sequence spans 213 residues: Methylthioribulose-1-phosphate dehydratase (213 aa).

The Zn(2+) site is built by His-97 and His-99.

It belongs to the aldolase class II family. MtnB subfamily. Homotetramer. It depends on Zn(2+) as a cofactor.

The enzyme catalyses 5-(methylsulfanyl)-D-ribulose 1-phosphate = 5-methylsulfanyl-2,3-dioxopentyl phosphate + H2O. It participates in amino-acid biosynthesis; L-methionine biosynthesis via salvage pathway; L-methionine from S-methyl-5-thio-alpha-D-ribose 1-phosphate: step 2/6. In terms of biological role, catalyzes the dehydration of methylthioribulose-1-phosphate (MTRu-1-P) into 2,3-diketo-5-methylthiopentyl-1-phosphate (DK-MTP-1-P). This chain is Methylthioribulose-1-phosphate dehydratase, found in Geobacillus sp. (strain WCH70).